A 324-amino-acid chain; its full sequence is Alkanal monooxygenase beta chain (324 aa).

The protein belongs to the bacterial luciferase oxidoreductase family. As to quaternary structure, heterodimer of an alpha and a beta chain.

The catalysed reaction is a long-chain fatty aldehyde + FMNH2 + O2 = a long-chain fatty acid + hnu + FMN + H2O + 2 H(+). Functionally, light-emitting reaction in luminous bacteria. The specific role of the beta subunit is unknown, but it is absolutely required for bioluminescence activity. The chain is Alkanal monooxygenase beta chain (luxB) from Vibrio harveyi (Beneckea harveyi).